A 1196-amino-acid chain; its full sequence is Probable cation-transporting ATPase 13A4 (1196 aa).

Residues 1–31 (MGHFEKGQHALLNEGEENEMEIFGYRTQGCR) are Cytoplasmic-facing. Residues 32–52 (KSLCLAGSIFSFGILPLVFYW) lie within the membrane without spanning it. The Cytoplasmic portion of the chain corresponds to 53–197 (RPAWHVWAHC…DVEVTPIWKL (145 aa)). A helical transmembrane segment spans residues 198–218 (LIKEVLNPFYIFQLFSVCLWF). At 219 to 223 (SEDYK) the chain is on the lumenal side. A helical transmembrane segment spans residues 224–244 (EYAFAIIIMSIISISLTVYDL). Residues 245–400 (REQSVKLHHL…NFQLYRDAIR (156 aa)) lie on the Cytoplasmic side of the membrane. A helical transmembrane segment spans residues 401-421 (FLLCLVGTATIGMIYTLCVYV). Over 422–436 (LSGEPPEEVVRKALD) the chain is Lumenal. Residues 437-457 (VITIAVPPALPAALTTGIIYA) traverse the membrane as a helical segment. Over 458–900 (QRRLKKRGIF…KEGRAALVTS (443 aa)) the chain is Cytoplasmic. Residue aspartate 486 is the 4-aspartylphosphate intermediate of the active site. Mg(2+) is bound by residues aspartate 848 and aspartate 852. A helical membrane pass occupies residues 901–921 (FCMFKYMALYSMIQYVGVLLL). Residues 922 to 932 (YWETNSLSNYQ) are Lumenal-facing. Residues 933–953 (FLFQDLAITTLIGVTMNLNGA) traverse the membrane as a helical segment. Residues 954-972 (YPKLVPFRPAGRLISPPLL) lie on the Cytoplasmic side of the membrane. Residues 973 to 993 (LSVIFNILLSLAMHIAGFILV) traverse the membrane as a helical segment. Residues 994 to 1035 (QRQPWYSVEIHSACTVQNESISELTMSPTAPEKMESNSTFTS) are Lumenal-facing. Residues 1036 to 1056 (FENTTVWFLGTINCITVALVF) traverse the membrane as a helical segment. Over 1057 to 1070 (SKGKPFRQPTYTNY) the chain is Cytoplasmic. Residues 1071 to 1091 (IFVLVLIIQLGVCLFILFADI) form a helical membrane-spanning segment. At 1092–1109 (PELYRRLDLLCTPVLWRA) the chain is on the lumenal side. Residues 1110–1130 (SIVIMLSLNFIVSLVAEEAVI) traverse the membrane as a helical segment. At 1131–1196 (ENRALWMMIK…PVFESNEEQL (66 aa)) the chain is on the cytoplasmic side.

The protein belongs to the cation transport ATPase (P-type) (TC 3.A.3) family. Type V subfamily. As to expression, expressed in heart, placenta, liver, skeletal muscles, and pancreas. Lower levels of expression are also detected in brain, lung and kidney. Weakly expressed in the adult brain. Expression in fetal brain is higher than in adult brain, with levels similar to several other fetal tissues including spleen and skeletal muscle. In adult brain expressed at low levels in all tissues examined, including the temporal lobe and putamen. Highly expressed in the respiratory and integumentary systems.

Its subcellular location is the early endosome membrane. The protein resides in the late endosome membrane. The protein localises to the recycling endosome membrane. It catalyses the reaction ATP + H2O = ADP + phosphate + H(+). The chain is Probable cation-transporting ATPase 13A4 (ATP13A4) from Homo sapiens (Human).